A 464-amino-acid chain; its full sequence is Argininosuccinate lyase (464 aa).

This sequence belongs to the lyase 1 family. Argininosuccinate lyase subfamily.

It is found in the cytoplasm. The catalysed reaction is 2-(N(omega)-L-arginino)succinate = fumarate + L-arginine. It functions in the pathway amino-acid biosynthesis; L-arginine biosynthesis; L-arginine from L-ornithine and carbamoyl phosphate: step 3/3. The polypeptide is Argininosuccinate lyase (Sulfurovum sp. (strain NBC37-1)).